Here is a 962-residue protein sequence, read N- to C-terminus: Glycine dehydrogenase (decarboxylating) (962 aa).

Lys-709 bears the N6-(pyridoxal phosphate)lysine mark.

The protein belongs to the GcvP family. The glycine cleavage system is composed of four proteins: P, T, L and H. Pyridoxal 5'-phosphate is required as a cofactor.

The enzyme catalyses N(6)-[(R)-lipoyl]-L-lysyl-[glycine-cleavage complex H protein] + glycine + H(+) = N(6)-[(R)-S(8)-aminomethyldihydrolipoyl]-L-lysyl-[glycine-cleavage complex H protein] + CO2. The glycine cleavage system catalyzes the degradation of glycine. The P protein binds the alpha-amino group of glycine through its pyridoxal phosphate cofactor; CO(2) is released and the remaining methylamine moiety is then transferred to the lipoamide cofactor of the H protein. The polypeptide is Glycine dehydrogenase (decarboxylating) (Shewanella loihica (strain ATCC BAA-1088 / PV-4)).